The following is a 185-amino-acid chain: Elongation factor P (185 aa).

Belongs to the elongation factor P family.

The protein resides in the cytoplasm. The protein operates within protein biosynthesis; polypeptide chain elongation. Involved in peptide bond synthesis. Stimulates efficient translation and peptide-bond synthesis on native or reconstituted 70S ribosomes in vitro. Probably functions indirectly by altering the affinity of the ribosome for aminoacyl-tRNA, thus increasing their reactivity as acceptors for peptidyl transferase. This Synechococcus sp. (strain JA-3-3Ab) (Cyanobacteria bacterium Yellowstone A-Prime) protein is Elongation factor P.